The primary structure comprises 97 residues: MKIRPLHDRVIIKRIEAEAKSAGGIVLTGTAAQKSTRGEVLAVGTGRILDNGDVKALAVKVGDKVIFNEGYGVKTEKLDGQDVLILSETDILAIVEA.

Belongs to the GroES chaperonin family. As to quaternary structure, heptamer of 7 subunits arranged in a ring. Interacts with the chaperonin GroEL.

It localises to the cytoplasm. Functionally, together with the chaperonin GroEL, plays an essential role in assisting protein folding. The GroEL-GroES system forms a nano-cage that allows encapsulation of the non-native substrate proteins and provides a physical environment optimized to promote and accelerate protein folding. GroES binds to the apical surface of the GroEL ring, thereby capping the opening of the GroEL channel. The polypeptide is Co-chaperonin GroES (Aeromonas salmonicida (strain A449)).